The sequence spans 359 residues: Histidinol-phosphate aminotransferase (359 aa).

N6-(pyridoxal phosphate)lysine is present on K217.

The protein belongs to the class-II pyridoxal-phosphate-dependent aminotransferase family. Histidinol-phosphate aminotransferase subfamily. Homodimer. The cofactor is pyridoxal 5'-phosphate.

It carries out the reaction L-histidinol phosphate + 2-oxoglutarate = 3-(imidazol-4-yl)-2-oxopropyl phosphate + L-glutamate. The protein operates within amino-acid biosynthesis; L-histidine biosynthesis; L-histidine from 5-phospho-alpha-D-ribose 1-diphosphate: step 7/9. This is Histidinol-phosphate aminotransferase from Citrobacter koseri (strain ATCC BAA-895 / CDC 4225-83 / SGSC4696).